Consider the following 133-residue polypeptide: Histone H2A.1 (133 aa).

The tract at residues 1–23 (MSTTGKGGKAKGKTASSKQVSRS) is disordered. Residue serine 2 is modified to N-acetylserine. An N6-acetyllysine mark is found at lysine 6, lysine 9, lysine 11, lysine 13, and lysine 18. Serine 123 carries the post-translational modification Phosphoserine. Lysine 124 participates in a covalent cross-link: Glycyl lysine isopeptide (Lys-Gly) (interchain with G-Cter in ubiquitin). Serine 129 is modified (phosphoserine).

It belongs to the histone H2A family. In terms of assembly, the nucleosome is a histone octamer containing two molecules each of H2A, H2B, H3 and H4 assembled in one H3-H4 heterotetramer and two H2A-H2B heterodimers. The octamer wraps approximately 147 bp of DNA. Monoubiquitination of Lys-124 gives a specific tag for epigenetic transcriptional repression. In terms of processing, acetylation occurs almost exclusively in the MAC.

It localises to the nucleus. Its subcellular location is the chromosome. In terms of biological role, core component of nucleosome. Nucleosomes wrap and compact DNA into chromatin, limiting DNA accessibility to the cellular machineries which require DNA as a template. Histones thereby play a central role in transcription regulation, DNA repair, DNA replication and chromosomal stability. DNA accessibility is regulated via a complex set of post-translational modifications of histones, also called histone code, and nucleosome remodeling. This is Histone H2A.1 (HTA2) from Tetrahymena pyriformis.